Consider the following 187-residue polypeptide: Isopentenyl-diphosphate Delta-isomerase (187 aa).

Mn(2+) contacts are provided by His36, His43, and His80. Residues 41–178 (VRHRAFTALL…RQLRLCPWFE (138 aa)) form the Nudix hydrolase domain. Glu98 is a Mg(2+) binding site. Mn(2+) contacts are provided by Glu127 and Glu129. Glu129 is a catalytic residue.

The protein belongs to the IPP isomerase type 1 family. Requires Mg(2+) as cofactor. The cofactor is Mn(2+).

The protein localises to the cytoplasm. The catalysed reaction is isopentenyl diphosphate = dimethylallyl diphosphate. It functions in the pathway isoprenoid biosynthesis; dimethylallyl diphosphate biosynthesis; dimethylallyl diphosphate from isopentenyl diphosphate: step 1/1. In terms of biological role, catalyzes the 1,3-allylic rearrangement of the homoallylic substrate isopentenyl (IPP) to its highly electrophilic allylic isomer, dimethylallyl diphosphate (DMAPP). This is Isopentenyl-diphosphate Delta-isomerase from Haloarcula marismortui (strain ATCC 43049 / DSM 3752 / JCM 8966 / VKM B-1809) (Halobacterium marismortui).